The chain runs to 193 residues: 3-isopropylmalate dehydratase small subunit (193 aa).

This sequence belongs to the LeuD family. LeuD type 1 subfamily. In terms of assembly, heterodimer of LeuC and LeuD.

It carries out the reaction (2R,3S)-3-isopropylmalate = (2S)-2-isopropylmalate. It participates in amino-acid biosynthesis; L-leucine biosynthesis; L-leucine from 3-methyl-2-oxobutanoate: step 2/4. In terms of biological role, catalyzes the isomerization between 2-isopropylmalate and 3-isopropylmalate, via the formation of 2-isopropylmaleate. This chain is 3-isopropylmalate dehydratase small subunit, found in Bacillus cereus (strain ATCC 10987 / NRS 248).